The following is a 439-amino-acid chain: Adenylosuccinate synthetase (439 aa).

Residues 25–31 and 53–55 contribute to the GTP site; these read GDEGKGK and GHT. Residue aspartate 26 is the Proton acceptor of the active site. Mg(2+) is bound by residues aspartate 26 and glycine 53. IMP is bound by residues 26–29, 51–54, threonine 146, arginine 160, asparagine 237, threonine 252, and arginine 316; these read DEGK and NAGH. The active-site Proton donor is histidine 54. 312–318 contacts substrate; the sequence is VTTGRRR. GTP is bound by residues arginine 318, 344-346, and 426-428; these read KLD and GVG.

Belongs to the adenylosuccinate synthetase family. In terms of assembly, homodimer. Requires Mg(2+) as cofactor.

Its subcellular location is the cytoplasm. It carries out the reaction IMP + L-aspartate + GTP = N(6)-(1,2-dicarboxyethyl)-AMP + GDP + phosphate + 2 H(+). It participates in purine metabolism; AMP biosynthesis via de novo pathway; AMP from IMP: step 1/2. In terms of biological role, plays an important role in the de novo pathway and in the salvage pathway of purine nucleotide biosynthesis. Catalyzes the first committed step in the biosynthesis of AMP from IMP. This is Adenylosuccinate synthetase from Mycosarcoma maydis (Corn smut fungus).